We begin with the raw amino-acid sequence, 305 residues long: Aspartate carbamoyltransferase catalytic subunit (305 aa).

Carbamoyl phosphate contacts are provided by Arg54 and Thr55. Lys82 is an L-aspartate binding site. Residues Arg104, His132, and Gln135 each contribute to the carbamoyl phosphate site. Residues Arg165 and Arg218 each coordinate L-aspartate. Positions 259 and 260 each coordinate carbamoyl phosphate.

This sequence belongs to the aspartate/ornithine carbamoyltransferase superfamily. ATCase family. Heterododecamer (2C3:3R2) of six catalytic PyrB chains organized as two trimers (C3), and six regulatory PyrI chains organized as three dimers (R2).

It carries out the reaction carbamoyl phosphate + L-aspartate = N-carbamoyl-L-aspartate + phosphate + H(+). The protein operates within pyrimidine metabolism; UMP biosynthesis via de novo pathway; (S)-dihydroorotate from bicarbonate: step 2/3. In terms of biological role, catalyzes the condensation of carbamoyl phosphate and aspartate to form carbamoyl aspartate and inorganic phosphate, the committed step in the de novo pyrimidine nucleotide biosynthesis pathway. The polypeptide is Aspartate carbamoyltransferase catalytic subunit (Caldicellulosiruptor bescii (strain ATCC BAA-1888 / DSM 6725 / KCTC 15123 / Z-1320) (Anaerocellum thermophilum)).